Here is a 251-residue protein sequence, read N- to C-terminus: Ditrans,polycis-undecaprenyl-diphosphate synthase ((2E,6E)-farnesyl-diphosphate specific) (251 aa).

D19 is an active-site residue. Residue D19 participates in Mg(2+) binding. Substrate-binding positions include 20 to 23, W24, H36, and 64 to 66; these read GNNR and SSE. N67 serves as the catalytic Proton acceptor. Substrate contacts are provided by residues W68, R70, R187, and 193 to 195; that span reads RIS. Residue E206 participates in Mg(2+) binding.

Belongs to the UPP synthase family. In terms of assembly, homodimer. It depends on Mg(2+) as a cofactor.

The enzyme catalyses 8 isopentenyl diphosphate + (2E,6E)-farnesyl diphosphate = di-trans,octa-cis-undecaprenyl diphosphate + 8 diphosphate. Its function is as follows. Catalyzes the sequential condensation of isopentenyl diphosphate (IPP) with (2E,6E)-farnesyl diphosphate (E,E-FPP) to yield (2Z,6Z,10Z,14Z,18Z,22Z,26Z,30Z,34E,38E)-undecaprenyl diphosphate (di-trans,octa-cis-UPP). UPP is the precursor of glycosyl carrier lipid in the biosynthesis of bacterial cell wall polysaccharide components such as peptidoglycan and lipopolysaccharide. This Pseudomonas aeruginosa (strain ATCC 15692 / DSM 22644 / CIP 104116 / JCM 14847 / LMG 12228 / 1C / PRS 101 / PAO1) protein is Ditrans,polycis-undecaprenyl-diphosphate synthase ((2E,6E)-farnesyl-diphosphate specific).